We begin with the raw amino-acid sequence, 119 residues long: Large ribosomal subunit protein bL19 (119 aa).

This sequence belongs to the bacterial ribosomal protein bL19 family.

In terms of biological role, this protein is located at the 30S-50S ribosomal subunit interface and may play a role in the structure and function of the aminoacyl-tRNA binding site. In Pseudoalteromonas atlantica (strain T6c / ATCC BAA-1087), this protein is Large ribosomal subunit protein bL19.